The sequence spans 387 residues: Queuine tRNA-ribosyltransferase (387 aa).

Residue aspartate 105 is the Proton acceptor of the active site. Substrate-binding positions include aspartate 105–phenylalanine 109, aspartate 177, and glycine 248. An RNA binding region spans residues glycine 278–serine 284. Residue aspartate 297 is the Nucleophile of the active site. The interval threonine 302–arginine 306 is RNA binding; important for wobble base 34 recognition. Zn(2+)-binding residues include cysteine 335, cysteine 337, cysteine 340, and histidine 366.

It belongs to the queuine tRNA-ribosyltransferase family. As to quaternary structure, homodimer. Within each dimer, one monomer is responsible for RNA recognition and catalysis, while the other monomer binds to the replacement base PreQ1. The cofactor is Zn(2+).

It carries out the reaction 7-aminomethyl-7-carbaguanine + guanosine(34) in tRNA = 7-aminomethyl-7-carbaguanosine(34) in tRNA + guanine. It functions in the pathway tRNA modification; tRNA-queuosine biosynthesis. Functionally, catalyzes the base-exchange of a guanine (G) residue with the queuine precursor 7-aminomethyl-7-deazaguanine (PreQ1) at position 34 (anticodon wobble position) in tRNAs with GU(N) anticodons (tRNA-Asp, -Asn, -His and -Tyr). Catalysis occurs through a double-displacement mechanism. The nucleophile active site attacks the C1' of nucleotide 34 to detach the guanine base from the RNA, forming a covalent enzyme-RNA intermediate. The proton acceptor active site deprotonates the incoming PreQ1, allowing a nucleophilic attack on the C1' of the ribose to form the product. After dissociation, two additional enzymatic reactions on the tRNA convert PreQ1 to queuine (Q), resulting in the hypermodified nucleoside queuosine (7-(((4,5-cis-dihydroxy-2-cyclopenten-1-yl)amino)methyl)-7-deazaguanosine). In Protochlamydia amoebophila (strain UWE25), this protein is Queuine tRNA-ribosyltransferase.